A 328-amino-acid polypeptide reads, in one-letter code: Malate dehydrogenase (328 aa).

Position 13–19 (13–19 (GGTGQIA)) interacts with NAD(+). Residues R94 and R100 each coordinate substrate. NAD(+)-binding positions include N107, Q114, and 131-133 (VGN). The substrate site is built by N133 and R164. H189 serves as the catalytic Proton acceptor.

Belongs to the LDH/MDH superfamily. MDH type 2 family.

It carries out the reaction (S)-malate + NAD(+) = oxaloacetate + NADH + H(+). Catalyzes the reversible oxidation of malate to oxaloacetate. This is Malate dehydrogenase from Chlamydia felis (strain Fe/C-56) (Chlamydophila felis).